The primary structure comprises 339 residues: DNA-directed RNA polymerase subunit alpha (339 aa).

Residues 1–233 (MVREEVAGST…DLFLPFLHAE (233 aa)) are alpha N-terminal domain (alpha-NTD). An alpha C-terminal domain (alpha-CTD) region spans residues 266 to 339 (GIPLNCIFID…IDLLKNKLSF (74 aa)).

The protein belongs to the RNA polymerase alpha chain family. In terms of assembly, in plastids the minimal PEP RNA polymerase catalytic core is composed of four subunits: alpha, beta, beta', and beta''. When a (nuclear-encoded) sigma factor is associated with the core the holoenzyme is formed, which can initiate transcription.

The protein localises to the plastid. Its subcellular location is the chloroplast. It catalyses the reaction RNA(n) + a ribonucleoside 5'-triphosphate = RNA(n+1) + diphosphate. Functionally, DNA-dependent RNA polymerase catalyzes the transcription of DNA into RNA using the four ribonucleoside triphosphates as substrates. This Psathyrostachys juncea (Russian wildrye) protein is DNA-directed RNA polymerase subunit alpha.